A 1099-amino-acid polypeptide reads, in one-letter code: Carbamoyl phosphate synthase large chain (1099 aa).

A carboxyphosphate synthetic domain region spans residues 1-402 (MPKREDIKRI…ALGKALRSLE (402 aa)). Positions 129, 169, 175, 176, 208, 210, 215, 241, 242, 243, 285, and 299 each coordinate ATP. An ATP-grasp 1 domain is found at 133–328 (KETMEKAGLE…IAKVAALLAV (196 aa)). Mg(2+)-binding residues include Gln-285, Glu-299, and Asn-301. Positions 285, 299, and 301 each coordinate Mn(2+). The interval 403–541 (LDAAPKLDLE…STYNGVENEA (139 aa)) is oligomerization domain. The carbamoyl phosphate synthetic domain stretch occupies residues 542 to 944 (VPSDREKIMI…AFAKAQIAAG (403 aa)). The ATP-grasp 2 domain occupies 666–857 (AKLLKQIGLK…VARIAAKIMV (192 aa)). Positions 702, 741, 743, 748, 773, 774, 775, 776, 816, and 828 each coordinate ATP. Residues Gln-816, Glu-828, and Asn-830 each coordinate Mg(2+). 3 residues coordinate Mn(2+): Gln-816, Glu-828, and Asn-830. Residues 945–1099 (NPLPTTGAIL…VRRLTDTWKM (155 aa)) enclose the MGS-like domain. The tract at residues 945–1099 (NPLPTTGAIL…VRRLTDTWKM (155 aa)) is allosteric domain.

The protein belongs to the CarB family. In terms of assembly, composed of two chains; the small (or glutamine) chain promotes the hydrolysis of glutamine to ammonia, which is used by the large (or ammonia) chain to synthesize carbamoyl phosphate. Tetramer of heterodimers (alpha,beta)4. Mg(2+) is required as a cofactor. The cofactor is Mn(2+).

The enzyme catalyses hydrogencarbonate + L-glutamine + 2 ATP + H2O = carbamoyl phosphate + L-glutamate + 2 ADP + phosphate + 2 H(+). It carries out the reaction hydrogencarbonate + NH4(+) + 2 ATP = carbamoyl phosphate + 2 ADP + phosphate + 2 H(+). It participates in amino-acid biosynthesis; L-arginine biosynthesis; carbamoyl phosphate from bicarbonate: step 1/1. Its pathway is pyrimidine metabolism; UMP biosynthesis via de novo pathway; (S)-dihydroorotate from bicarbonate: step 1/3. Its function is as follows. Large subunit of the glutamine-dependent carbamoyl phosphate synthetase (CPSase). CPSase catalyzes the formation of carbamoyl phosphate from the ammonia moiety of glutamine, carbonate, and phosphate donated by ATP, constituting the first step of 2 biosynthetic pathways, one leading to arginine and/or urea and the other to pyrimidine nucleotides. The large subunit (synthetase) binds the substrates ammonia (free or transferred from glutamine from the small subunit), hydrogencarbonate and ATP and carries out an ATP-coupled ligase reaction, activating hydrogencarbonate by forming carboxy phosphate which reacts with ammonia to form carbamoyl phosphate. The protein is Carbamoyl phosphate synthase large chain of Thermotoga sp. (strain RQ2).